Consider the following 150-residue polypeptide: MMLNDVRPAIGAKKRKKRVGCGESSGHGKTSGRGHKGQKARAGGSIRIGFEGGQMPLIRRIPKRGFNNKLFHVFYAPVNLSALQGIQQEVIDESLLRQIGVVKGKWDGIKILGKGEITQAYTFKVHAVSASAKEKIEKAGGKIELIKSTP.

The interval 12 to 43 (AKKRKKRVGCGESSGHGKTSGRGHKGQKARAG) is disordered. Residues 30–39 (TSGRGHKGQK) show a composition bias toward basic residues.

It belongs to the universal ribosomal protein uL15 family. In terms of assembly, part of the 50S ribosomal subunit.

Functionally, binds to the 23S rRNA. This chain is Large ribosomal subunit protein uL15, found in Methylacidiphilum infernorum (isolate V4) (Methylokorus infernorum (strain V4)).